Consider the following 826-residue polypeptide: Zinc phosphodiesterase ELAC protein 2 (826 aa).

Residues 1–16 (MWALCSLLRSAAGRTM) constitute a mitochondrion transit peptide. Disordered regions lie at residues 16-51 (MSQG…PSGC) and 188-231 (EQRR…VSQR). The segment covering 27-38 (ARRERPRKDPLR) has biased composition (basic and acidic residues). 6 positions are modified to phosphoserine: S199, S208, S212, S229, S618, and S736. Positions 208–224 (SPERSSDSESNENEPHL) are enriched in basic and acidic residues. Residues 798 to 826 (ELAGGLEDGEPQQKRAHTEEPQAKKVRAQ) form a disordered region. A compositionally biased stretch (basic and acidic residues) spans 808–820 (PQQKRAHTEEPQA).

The protein belongs to the RNase Z family. In terms of assembly, homodimer. Interacts with PTCD1. The cofactor is Zn(2+). Widely expressed. Highly expressed in heart, placenta, liver, skeletal muscle, kidney, pancreas, testis and ovary. Weakly expressed in brain, lung, spleen, thymus, prostate, small intestine, colon and leukocytes.

The protein resides in the mitochondrion. The protein localises to the mitochondrion matrix. It localises to the mitochondrion nucleoid. Its subcellular location is the nucleus. It carries out the reaction Endonucleolytic cleavage of RNA, removing extra 3' nucleotides from tRNA precursor, generating 3' termini of tRNAs. A 3'-hydroxy group is left at the tRNA terminus and a 5'-phosphoryl group is left at the trailer molecule.. Functionally, zinc phosphodiesterase, which displays mitochondrial tRNA 3'-processing endonuclease activity. Involved in tRNA maturation, by removing a 3'-trailer from precursor tRNA. Associates with mitochondrial DNA complexes at the nucleoids to initiate RNA processing and ribosome assembly. The sequence is that of Zinc phosphodiesterase ELAC protein 2 (ELAC2) from Homo sapiens (Human).